The primary structure comprises 388 residues: Protein TsgA homolog (388 aa).

12 helical membrane-spanning segments follow: residues 11–31, 50–70, 77–97, 101–121, 133–153, 160–180, 206–226, 244–264, 268–288, 298–318, 332–352, and 360–380; these read WISF…GMIM, TFLN…IEII, IFSF…NSIF, INMF…TFII, LLLL…IVTA, IIWY…FLLT, VFLL…FISW, SLVS…SFII, NLYR…YCFI, YIII…ITLA, LILL…SPIV, and TLIS…LIYF.

It belongs to the major facilitator superfamily. TsgA family.

It localises to the cell membrane. In Buchnera aphidicola subsp. Acyrthosiphon pisum (strain Tuc7), this protein is Protein TsgA homolog.